A 90-amino-acid chain; its full sequence is Putative sodium channel toxin Ts35 (90 aa).

The N-terminal stretch at 1-22 (QDEVGLGSCSVIFVVGNEEGEA) is a signal peptide. Positions 23–87 (KDGYAVGGDR…WGNPTLGPCL (65 aa)) constitute an LCN-type CS-alpha/beta domain. Cystine bridges form between Cys-33–Cys-86, Cys-37–Cys-61, Cys-46–Cys-66, and Cys-50–Cys-68.

It belongs to the long (4 C-C) scorpion toxin superfamily. Sodium channel inhibitor family. Expressed by the venom gland.

The protein resides in the secreted. Its function is as follows. Putative sodium channel toxin. This Tityus serrulatus (Brazilian scorpion) protein is Putative sodium channel toxin Ts35.